Here is an 815-residue protein sequence, read N- to C-terminus: ABC transporter G family member 7 (815 aa).

2 disordered regions span residues 81 to 141 (NNID…TPNF) and 177 to 249 (KQIK…TNGK). The stretch at 164–199 (ENISYKTENRNYKKQIKDEKKRKKKLEMERSNSSNS) forms a coiled coil. Residues 194 to 210 (SNSSNSNSSYDVESSAS) are compositionally biased toward low complexity. Over residues 211–248 (GLQTPQQSRSSILPTNSLNISKIDQSMNPQQTRSTTNG) the composition is skewed to polar residues. Residues 242 to 485 (TRSTTNGKIE…SLPNQYQCPN (244 aa)) form the ABC transporter domain. ATP is bound at residue 274–281 (GPSGSGKS). The 249-residue stretch at 562 to 810 (TQYITRLSGG…VSGYWAISKL (249 aa)) folds into the ABC transmembrane type-2 domain. Transmembrane regions (helical) follow at residues 568–588 (LSGGFMIGLLFSACFGTLSPS), 598–618 (ILFFLIAVLNLIPFTCITLFL), 647–667 (AFIQFLVSLIVSLLVYTINHL), 675–695 (FITYFILYLINLLSDLYIIAI), 706–726 (FIYGTTISITFLLFMGHLVPV), 732–752 (SFGWIHWLNPLYYGYATVMVA), and 788–808 (GIGIIILWICFFFVSGYWAIS).

The protein belongs to the ABC transporter superfamily. ABCG family.

The protein resides in the membrane. This is ABC transporter G family member 7 (abcG7) from Dictyostelium discoideum (Social amoeba).